We begin with the raw amino-acid sequence, 345 residues long: Flap endonuclease 1 (345 aa).

An N-domain region spans residues 1 to 103; the sequence is MGIKQLSKLL…KELEKRKERR (103 aa). D34 contacts Mg(2+). R47 and R69 together coordinate DNA. Residues D85, E157, E159, D178, and D180 each coordinate Mg(2+). Residues 121–252 form an I-domain region; sequence LMEMYDKRKT…KKALGLIKKH (132 aa). DNA is bound at residue E157. DNA is bound by residues G230 and D232. D232 contributes to the Mg(2+) binding site. The segment at 333–341 is interaction with PCNA; that stretch reads TQGRLDCFI.

Belongs to the XPG/RAD2 endonuclease family. FEN1 subfamily. As to quaternary structure, interacts with PCNA. Three molecules of FEN1 bind to one PCNA trimer with each molecule binding to one PCNA monomer. PCNA stimulates the nuclease activity without altering cleavage specificity. Mg(2+) serves as cofactor. Post-translationally, phosphorylated. Phosphorylation upon DNA damage induces relocalization to the nuclear plasma.

The protein resides in the nucleus. It localises to the nucleolus. Its subcellular location is the nucleoplasm. The protein localises to the mitochondrion. Functionally, structure-specific nuclease with 5'-flap endonuclease and 5'-3' exonuclease activities involved in DNA replication and repair. During DNA replication, cleaves the 5'-overhanging flap structure that is generated by displacement synthesis when DNA polymerase encounters the 5'-end of a downstream Okazaki fragment. It enters the flap from the 5'-end and then tracks to cleave the flap base, leaving a nick for ligation. Also involved in the long patch base excision repair (LP-BER) pathway, by cleaving within the apurinic/apyrimidinic (AP) site-terminated flap. Acts as a genome stabilization factor that prevents flaps from equilibrating into structures that lead to duplications and deletions. Also possesses 5'-3' exonuclease activity on nicked or gapped double-stranded DNA, and exhibits RNase H activity. Also involved in replication and repair of rDNA and in repairing mitochondrial DNA. This chain is Flap endonuclease 1, found in Encephalitozoon cuniculi (strain GB-M1) (Microsporidian parasite).